The primary structure comprises 396 residues: Tryptophan synthase beta chain (396 aa).

Residue Lys-86 is modified to N6-(pyridoxal phosphate)lysine.

It belongs to the TrpB family. As to quaternary structure, tetramer of two alpha and two beta chains. It depends on pyridoxal 5'-phosphate as a cofactor.

It catalyses the reaction (1S,2R)-1-C-(indol-3-yl)glycerol 3-phosphate + L-serine = D-glyceraldehyde 3-phosphate + L-tryptophan + H2O. It participates in amino-acid biosynthesis; L-tryptophan biosynthesis; L-tryptophan from chorismate: step 5/5. In terms of biological role, the beta subunit is responsible for the synthesis of L-tryptophan from indole and L-serine. The chain is Tryptophan synthase beta chain from Francisella philomiragia subsp. philomiragia (strain ATCC 25017 / CCUG 19701 / FSC 153 / O#319-036).